The chain runs to 369 residues: MSIDFQQLPHAGIRSLIPYVPGKSIEELAKEKGITDIIKLASNENPLGCSPLALSAIQTMSSHYIATYPSPWNHPLMSKLASYLKVKPEQLFLSNGSDYLFNILLNCFALHTDRHILTHDYAFSTYAIQANSLQIPINSVPIGHNWEVNITDIVNACNQQTGIIFIANPNNPTGMLIQQEEIKYLLEQIPKSTLLVLDEAYYEFAASQLTVNSLDWLEEHPNLVVTRTFSKIYGMAGLRLGYAIANPSIINILKRVQLPFIVNQVALAAAYAAIDDDDFIQSSLKMNNEGMSQLQAGFNELNIKYLHSSCNFLTFDCEEDSIALYNYLLDNGIIVRPLHAYKMNNFIRVTIGTKEQNSRFLTALKNFYL.

K231 bears the N6-(pyridoxal phosphate)lysine mark.

It belongs to the class-II pyridoxal-phosphate-dependent aminotransferase family. Histidinol-phosphate aminotransferase subfamily. Homodimer. Pyridoxal 5'-phosphate is required as a cofactor.

The enzyme catalyses L-histidinol phosphate + 2-oxoglutarate = 3-(imidazol-4-yl)-2-oxopropyl phosphate + L-glutamate. It participates in amino-acid biosynthesis; L-histidine biosynthesis; L-histidine from 5-phospho-alpha-D-ribose 1-diphosphate: step 7/9. The polypeptide is Histidinol-phosphate aminotransferase 2 (Legionella pneumophila (strain Paris)).